The chain runs to 138 residues: Small ribosomal subunit protein uS11c (138 aa).

This sequence belongs to the universal ribosomal protein uS11 family. As to quaternary structure, part of the 30S ribosomal subunit.

The protein localises to the plastid. Its subcellular location is the chloroplast. In Acorus calamus (Sweet flag), this protein is Small ribosomal subunit protein uS11c.